The primary structure comprises 123 residues: Methanesulfonate monooxygenase ferredoxin subunit (123 aa).

The region spanning 4-99 (TYLCDAADVA…LKEEDGKLLA (96 aa)) is the Rieske domain. The [2Fe-2S] cluster site is built by C43, H45, C63, and H66.

The protein belongs to the bacterial ring-hydroxylating dioxygenase ferredoxin component family. The MSA monooxygenase system consists of 4 proteins: the 2 subunits of the hydroxylase component (MsmA and MsmB), a ferredoxin (MsmC) and a ferredoxin reductase (MsmD). The ferredoxin component is dimeric. Requires [2Fe-2S] cluster as cofactor.

It localises to the cytoplasm. It catalyses the reaction methanesulfonate + NADH + O2 = sulfite + formaldehyde + NAD(+) + H2O. Its activity is regulated as follows. MSAMO is inhibited by metal chelators (such as bathophenanthroline, bathocuprione, neocuprione, alpha-alpha-dipyridil and sodium EDTA) and by sodium azide, sodium arsenate and potassium cyanide. In terms of biological role, methanesulfonate monooxygenase (MSAMO) mediates the primary degradation of methanesulfonic acid (MSA) to produce formaldehyd and inorganic sulfite by initial hydroxylation of the carbon atom prior to spontaneous cleavage of the unstable hydroxymethanesulfonic acid. MSAMO has a restricted substrate range that includes only the short-chain aliphatic sulfonates (methane- to butanesulfonate) and excludes all larger molecules, such as arylsulfonates and aromatic sulfonates. All MSAMO components are required for enzyme activity. This chain is Methanesulfonate monooxygenase ferredoxin subunit, found in Methylosulfonomonas methylovora.